Reading from the N-terminus, the 816-residue chain is Probable E3 ubiquitin-protein ligase hulA (816 aa).

The region spanning Met1–Arg112 is the C2 domain. Disordered regions lie at residues Asn134–Arg238 and Arg253–Asp353. 4 stretches are compositionally biased toward polar residues: residues Met151–Pro168, Ala177–Val202, Ser217–Asp226, and Arg253–Arg270. In terms of domain architecture, WW 1 spans Gly229–Asn262. Positions Leu279–Thr294 are enriched in basic and acidic residues. Residues Gly295–Gln309 are compositionally biased toward polar residues. Low complexity predominate over residues Thr310 to Gly333. 2 WW domains span residues Gly333–Arg366 and Gly393–Leu426. The region spanning Ser482–Glu816 is the HECT domain. Residue Cys784 is the Glycyl thioester intermediate of the active site.

The protein belongs to the RSP5/NEDD4 family. As to quaternary structure, interacts with creD.

The protein resides in the cytoplasm. It carries out the reaction S-ubiquitinyl-[E2 ubiquitin-conjugating enzyme]-L-cysteine + [acceptor protein]-L-lysine = [E2 ubiquitin-conjugating enzyme]-L-cysteine + N(6)-ubiquitinyl-[acceptor protein]-L-lysine.. It functions in the pathway protein modification; protein ubiquitination. Its function is as follows. E3 ubiquitin-protein ligase which accepts ubiquitin from an E2 ubiquitin-conjugating enzyme in the form of a thioester and then directly transfers the ubiquitin to targeted substrates. Probably involved in the regulatory network controlling carbon source utilization. The polypeptide is Probable E3 ubiquitin-protein ligase hulA (hulA) (Aspergillus oryzae (strain ATCC 42149 / RIB 40) (Yellow koji mold)).